Reading from the N-terminus, the 250-residue chain is Putative inner dynein arm light chain, axonemal (250 aa).

Positions 168–250 (MRKALQAHEE…QLEGITAPKK (83 aa)) form a coiled coil.

It belongs to the inner dynein arm light chain family.

It localises to the cell projection. It is found in the cilium. The protein localises to the dynein axonemal particle. Its function is as follows. May play a dynamic role in flagellar motility. The sequence is that of Putative inner dynein arm light chain, axonemal from Drosophila melanogaster (Fruit fly).